Reading from the N-terminus, the 446-residue chain is Sensor-type histidine kinase PrrB (446 aa).

2 helical membrane-spanning segments follow: residues 19-39 (VVAT…VVWV) and 151-171 (LLIC…LAAF). The 51-residue stretch at 172–222 (AVRPFKQLAQQTRSVDAGGEAPRVEVHGATEAVEIAEAMRGMLQRIWNEQN) folds into the HAMP domain. Positions 237–446 (VSSHELRTPL…RLLLRISAPS (210 aa)) constitute a Histidine kinase domain. Phosphohistidine; by autocatalysis is present on His-240.

Post-translationally, autophosphorylated.

Its subcellular location is the cell membrane. The catalysed reaction is ATP + protein L-histidine = ADP + protein N-phospho-L-histidine.. Its function is as follows. Member of the two-component regulatory system PrrB/PrrA that is involved specifically in early intracellular multiplication of Mycobacterium and is essential for its viability. Functions as a sensor protein kinase which is autophosphorylated at a histidine residue and transfers its phosphate group to the conserved aspartic acid residue in the regulatory domain of PrrA. In turn, PrrA binds to the upstream promoter regions of target genes including itself to positively regulate their expression. This chain is Sensor-type histidine kinase PrrB (prrB), found in Mycobacterium leprae (strain TN).